Consider the following 161-residue polypeptide: RNA pyrophosphohydrolase (161 aa).

The region spanning 7–149 (KYRPCVGIML…KKEVYKTVIE (143 aa)) is the Nudix hydrolase domain. The Nudix box signature appears at 40 to 61 (GGIDDGEKLEQAALRELLEEVG).

Belongs to the Nudix hydrolase family. RppH subfamily. A divalent metal cation serves as cofactor.

Functionally, accelerates the degradation of transcripts by removing pyrophosphate from the 5'-end of triphosphorylated RNA, leading to a more labile monophosphorylated state that can stimulate subsequent ribonuclease cleavage. This is RNA pyrophosphohydrolase from Wolbachia sp. subsp. Brugia malayi (strain TRS).